The sequence spans 465 residues: Siroheme synthase (465 aa).

Positions 1–203 (MDFLPLFHSL…GRPAEAERLL (203 aa)) are precorrin-2 dehydrogenase /sirohydrochlorin ferrochelatase. NAD(+) is bound by residues 22–23 (EV) and 43–44 (PQ). S128 bears the Phosphoserine mark. The segment at 217–465 (GEVYLVGAGP…AWFEGAREDA (249 aa)) is uroporphyrinogen-III C-methyltransferase. P226 lines the S-adenosyl-L-methionine pocket. D249 functions as the Proton acceptor in the catalytic mechanism. K271 serves as the catalytic Proton donor. Residues 302 to 304 (GGD), I307, 332 to 333 (TA), M384, and G413 contribute to the S-adenosyl-L-methionine site.

The protein in the N-terminal section; belongs to the precorrin-2 dehydrogenase / sirohydrochlorin ferrochelatase family. This sequence in the C-terminal section; belongs to the precorrin methyltransferase family.

It catalyses the reaction uroporphyrinogen III + 2 S-adenosyl-L-methionine = precorrin-2 + 2 S-adenosyl-L-homocysteine + H(+). The enzyme catalyses precorrin-2 + NAD(+) = sirohydrochlorin + NADH + 2 H(+). It carries out the reaction siroheme + 2 H(+) = sirohydrochlorin + Fe(2+). It functions in the pathway cofactor biosynthesis; adenosylcobalamin biosynthesis; precorrin-2 from uroporphyrinogen III: step 1/1. Its pathway is cofactor biosynthesis; adenosylcobalamin biosynthesis; sirohydrochlorin from precorrin-2: step 1/1. It participates in porphyrin-containing compound metabolism; siroheme biosynthesis; precorrin-2 from uroporphyrinogen III: step 1/1. The protein operates within porphyrin-containing compound metabolism; siroheme biosynthesis; siroheme from sirohydrochlorin: step 1/1. It functions in the pathway porphyrin-containing compound metabolism; siroheme biosynthesis; sirohydrochlorin from precorrin-2: step 1/1. In terms of biological role, multifunctional enzyme that catalyzes the SAM-dependent methylations of uroporphyrinogen III at position C-2 and C-7 to form precorrin-2 via precorrin-1. Then it catalyzes the NAD-dependent ring dehydrogenation of precorrin-2 to yield sirohydrochlorin. Finally, it catalyzes the ferrochelation of sirohydrochlorin to yield siroheme. The chain is Siroheme synthase from Pseudomonas aeruginosa (strain UCBPP-PA14).